The chain runs to 380 residues: tRNA (guanine(26)-N(2))-dimethyltransferase (380 aa).

A Trm1 methyltransferase domain is found at 2–374 (ITVNEGSVTI…AGIGEIEEVL (373 aa)). Residues arginine 35, arginine 65, aspartate 83, aspartate 109, and alanine 110 each coordinate S-adenosyl-L-methionine. Residues cysteine 242, cysteine 245, cysteine 261, and cysteine 264 each coordinate Zn(2+).

The protein belongs to the class I-like SAM-binding methyltransferase superfamily. Trm1 family.

The catalysed reaction is guanosine(26) in tRNA + 2 S-adenosyl-L-methionine = N(2)-dimethylguanosine(26) in tRNA + 2 S-adenosyl-L-homocysteine + 2 H(+). Functionally, dimethylates a single guanine residue at position 26 of a number of tRNAs using S-adenosyl-L-methionine as donor of the methyl groups. The sequence is that of tRNA (guanine(26)-N(2))-dimethyltransferase from Methanothermobacter thermautotrophicus (strain ATCC 29096 / DSM 1053 / JCM 10044 / NBRC 100330 / Delta H) (Methanobacterium thermoautotrophicum).